Consider the following 398-residue polypeptide: Lysophospholipid acyltransferase LPEAT1 (398 aa).

The interval 1-24 (MESELKDLNSNSNPPSSKEDRPLL) is disordered. Residue S28 is modified to Phosphoserine. A helical transmembrane segment spans residues 66 to 86 (LAVALVTLVPLRFLLSMSILL). Residues 158–185 (RDSDMDSNPKTTSTEINQKGEAATEEPE) are disordered. A compositionally biased stretch (polar residues) spans 163-174 (DSNPKTTSTEIN). Positions 194 to 199 (HVSYLD) match the HXXXXD motif motif.

The protein belongs to the 1-acyl-sn-glycerol-3-phosphate acyltransferase family.

It is found in the endoplasmic reticulum membrane. The enzyme catalyses a 1-acyl-sn-glycero-3-phosphoethanolamine + an acyl-CoA = a 1,2-diacyl-sn-glycero-3-phosphoethanolamine + CoA. It carries out the reaction a 1-acyl-sn-glycero-3-phosphate + an acyl-CoA = a 1,2-diacyl-sn-glycero-3-phosphate + CoA. It catalyses the reaction a 1-acyl-sn-glycero-3-phosphocholine + an acyl-CoA = a 1,2-diacyl-sn-glycero-3-phosphocholine + CoA. The catalysed reaction is a 1-acyl-sn-glycero-3-phospho-L-serine + an acyl-CoA = a 1,2-diacyl-sn-glycero-3-phospho-L-serine + CoA. Its pathway is lipid metabolism; phospholipid metabolism. Possesses acyl-CoA-dependent lysophospholipid acyltransferase activity with a subset of lysophospholipids as substrates. Exhibits strong acylation activity on lysophosphatidylethanolamine (LPE) and lysophosphatidate (LPA), and lower activity on lysophosphatidylcholine (LPC) and lysophosphatidylserine (LPS). Exhibits acylation activity on both LPE and LPC. Has a preference for 18:1-LPE over 16:0-LPE as acceptor. Palmitoyl-CoA (16:0-CoA) is a better acyl donor than oleoyl-CoA (18:1-CoA). Among several different acyl-CoA species the best acyl donor is palmitoyl-CoA (16:0-CoA). Activity is calcium-independent. Its activity is essential for maintaining adequate levels of phosphatidylethanolamine (PE), LPE and LPC in the cells, which is crucial for plant growth regulation. This chain is Lysophospholipid acyltransferase LPEAT1, found in Arabidopsis thaliana (Mouse-ear cress).